A 1470-amino-acid polypeptide reads, in one-letter code: Rap guanine nucleotide exchange factor (1470 aa).

2 disordered regions span residues 130–227 and 250–313; these read PTEP…SYND and HRRE…GGFM. A compositionally biased stretch (pro residues) spans 173–183; sequence MPPPPVPPRPL. 2 stretches are compositionally biased toward low complexity: residues 184-193 and 215-224; these read RLPQTAAKGP and TTSSSSSNTS. Positions 256–266 are enriched in polar residues; the sequence is NSVGGQAQNGI. Low complexity predominate over residues 275-292; the sequence is RSTASSTTTEGETASNEG. A nucleoside 3',5'-cyclic phosphate is bound at residue 347 to 463; the sequence is AFAALPMSIK…IEKDRDGLTG (117 aa). The 115-residue stretch at 478–592 folds into the N-terminal Ras-GEF domain; sequence CGQVLIKGKP…SLLNIACSVK (115 aa). The 83-residue stretch at 597 to 679 folds into the PDZ domain; that stretch reads QVILTRRKDD…LTLMLKNNVL (83 aa). Residues 782–869 enclose the Ras-associating domain; sequence PEHVLKIYRN…SRYYLKNNSR (88 aa). In terms of domain architecture, Ras-GEF spans 894 to 1124; that stretch reads NAQVVAAQLT…FENSNVATMR (231 aa). The span at 1176–1189 shows a compositional bias: polar residues; the sequence is QTAHRGANSSSTAN. Disordered regions lie at residues 1176–1213, 1253–1326, 1347–1370, and 1422–1455; these read QTAH…DQSS, KVKG…NIPP, VIPT…PASS, and ATLP…RMGT. Residues 1198 to 1211 are compositionally biased toward low complexity; sequence PSSLSSQSAGSADQ. Polar residues-rich tracts occupy residues 1260-1274 and 1282-1308; these read QITS…SLQR and RQAT…YQSD. A compositionally biased stretch (basic and acidic residues) spans 1309 to 1321; sequence NGRRQRSGSEGRF. The span at 1349–1370 shows a compositional bias: low complexity; the sequence is PTHPHGHSPTSPRCRSRSPASS.

The protein belongs to the RAPGEF2 family. As to expression, expressed in hermaphrodite-specific neurons (HSNs), oviduct sheath cells and lateral seam cells.

Its function is as follows. Acts as a guanine nucleotide exchange factor for small G protein GTPases like rap-1 and rap-2. Required in the hypodermis, especially in the seam cells, for proper formation of the cuticle. The chain is Rap guanine nucleotide exchange factor (pxf-1) from Caenorhabditis elegans.